A 252-amino-acid chain; its full sequence is Probable transcriptional regulatory protein all4276 (252 aa).

The protein belongs to the TACO1 family.

It localises to the cytoplasm. This Nostoc sp. (strain PCC 7120 / SAG 25.82 / UTEX 2576) protein is Probable transcriptional regulatory protein all4276.